Here is a 724-residue protein sequence, read N- to C-terminus: Catalase-peroxidase (724 aa).

A cross-link (tryptophyl-tyrosyl-methioninium (Trp-Tyr) (with M-252)) is located at residues 98–226 (WHAAGTYRIA…LAAVMMGLIY (129 aa)). The active-site Proton acceptor is the histidine 99. The segment at residues 226 to 252 (YVNPEGVDGNPDPLKTAHDIRVTFERM) is a cross-link (tryptophyl-tyrosyl-methioninium (Tyr-Met) (with W-98)). Histidine 267 provides a ligand contact to heme b.

It belongs to the peroxidase family. Peroxidase/catalase subfamily. As to quaternary structure, homodimer or homotetramer. It depends on heme b as a cofactor. In terms of processing, formation of the three residue Trp-Tyr-Met cross-link is important for the catalase, but not the peroxidase activity of the enzyme.

It carries out the reaction H2O2 + AH2 = A + 2 H2O. It catalyses the reaction 2 H2O2 = O2 + 2 H2O. Bifunctional enzyme with both catalase and broad-spectrum peroxidase activity. The polypeptide is Catalase-peroxidase (Psychromonas ingrahamii (strain DSM 17664 / CCUG 51855 / 37)).